Consider the following 752-residue polypeptide: F-box and WD repeat domain containing protein 10B (752 aa).

WD repeat units lie at residues 169 to 206 (GLNQDITDVCFSPEKDHSSKSATSQVYWTAKTQHTSLP), 451 to 490 (GHAGSVRALFLCEEENFLLSGSYDLSIRYWDLKSGVCTRI), 493 to 532 (GHQGTITCMDLCKNRLVSGGRDCQVKVWDVDTGKCLKTFR), 534 to 569 (KDPILATRINDTYIVSSCERGLVKVWHIAMAQLVKT), 572 to 609 (GHEGAVKCLFFDQWHLLSGSTDGLVMAWSMVGKYERCL), and 611 to 652 (AFKH…KVIK).

In terms of tissue distribution, expressed in pancreas, heart and skeletal muscle.

The protein is F-box and WD repeat domain containing protein 10B of Homo sapiens (Human).